The sequence spans 175 residues: Epididymal-specific lipocalin-8 (175 aa).

The signal sequence occupies residues 1–25 (MPGAAEALPTVTVTLVAGAVPPASG). 2 N-linked (GlcNAc...) asparagine glycosylation sites follow: N66 and N74. A disulfide bridge links C79 with C166.

It belongs to the calycin superfamily. Lipocalin family.

It is found in the secreted. May play a role in male fertility. May act as a retinoid carrier protein within the epididymis. The polypeptide is Epididymal-specific lipocalin-8 (LCN8) (Homo sapiens (Human)).